The chain runs to 243 residues: Phosphoribosylaminoimidazole-succinocarboxamide synthase (243 aa).

Belongs to the SAICAR synthetase family.

It carries out the reaction 5-amino-1-(5-phospho-D-ribosyl)imidazole-4-carboxylate + L-aspartate + ATP = (2S)-2-[5-amino-1-(5-phospho-beta-D-ribosyl)imidazole-4-carboxamido]succinate + ADP + phosphate + 2 H(+). It participates in purine metabolism; IMP biosynthesis via de novo pathway; 5-amino-1-(5-phospho-D-ribosyl)imidazole-4-carboxamide from 5-amino-1-(5-phospho-D-ribosyl)imidazole-4-carboxylate: step 1/2. This chain is Phosphoribosylaminoimidazole-succinocarboxamide synthase, found in Lactiplantibacillus plantarum (strain ATCC BAA-793 / NCIMB 8826 / WCFS1) (Lactobacillus plantarum).